Consider the following 5054-residue polypeptide: Malformin synthetase mlfA (5054 aa).

Residues 194-585 form an adenylation 1 region; sequence ERRAANRPHS…CGRADTQVKL (392 aa). Positions 723–799 constitute a Carrier 1 domain; sequence LGLSQLEQEI…EASSLAEVQE (77 aa). S760 carries the O-(pantetheine 4'-phosphoryl)serine modification. A condensation 1 region spans residues 837–1268; sequence EDVFPCTTMQ…ALNTLTLLQA (432 aa). The adenylation 2 stretch occupies residues 1296-1685; sequence DRWVTRQPES…GRKDTQVKLR (390 aa). Residues 1823-1900 form the Carrier 2 domain; it reads TASSKLELTL…QLAAILGEAT (78 aa). S1860 bears the O-(pantetheine 4'-phosphoryl)serine mark. Disordered regions lie at residues 1899-1929 and 1964-1994; these read ATGQPESSASSTTEEGFTFSTPDDSSTNDGV and GSSSCKTPSVSSSSSSSSSRKKKSAKVVSPV. Composition is skewed to low complexity over residues 1904–1927 and 1965–1981; these read ESSASSTTEEGFTFSTPDDSSTND and SSSCKTPSVSSSSSSSS. The interval 2033–2448 is condensation 2; it reads EDIYPATALQ…GVSYRDKQTL (416 aa). Residues 2471–2863 are adenylation 3; sequence VRTPHAPAVF…IGRRDGQLKL (393 aa). Residues 2999–3075 enclose the Carrier 3 domain; that stretch reads RPATAQEREM…QLMRHLSANG (77 aa). At S3036 the chain carries O-(pantetheine 4'-phosphoryl)serine. 2 condensation regions span residues 3092 to 3557 and 3578 to 3997; these read WVPL…TYDQ and DIYP…EQLV. Positions 4022–4412 are adenylation 4; sequence HSSREAACAW…VGRKDNQIKF (391 aa). The Carrier 4 domain maps to 4546–4622; the sequence is MPFTAAECKM…DLAYRTANLV (77 aa). The residue at position 4583 (S4583) is an O-(pantetheine 4'-phosphoryl)serine. The tract at residues 4659-4972 is condensation 5; that stretch reads EVLPTTSFQR…LQTIVQHQNN (314 aa).

Belongs to the NRP synthetase family.

It functions in the pathway secondary metabolite biosynthesis. Nonribosomal peptide synthetase; part of the gene cluster that mediates the biosynthesis of malformins, cyclic pentapeptides with a disulfide bond between 2 consecutive cysteins, that show potential anti-tumor as well as antimalarial and antitrypanosomal properties. The nonribosomal peptide synthetase mlfA is responsible of the formation of the cyclic pentapeptide. The malformin biosynthesis clusters in malformin-producing fungi also contain enzymes involved in the formation of the disulfide bond between the two consecutive cysteins within malformins, in addition to additional tailoring enzymes such as methyltransferases or oxidoreductases. They are also composed of up to 4 major facilitator superfamily transporters, and transcription factors probably involved in the regulation of the expression of those clusters. In Aspergillus niger (strain ATCC MYA-4892 / CBS 513.88 / FGSC A1513), this protein is Malformin synthetase mlfA.